Reading from the N-terminus, the 466-residue chain is tRNA-2-methylthio-N(6)-dimethylallyladenosine synthase (466 aa).

The 118-residue stretch at 22–139 (RRYYVWTVGC…VVALAPNPIY (118 aa)) folds into the MTTase N-terminal domain. [4Fe-4S] cluster contacts are provided by Cys-31, Cys-67, Cys-101, Cys-166, Cys-170, and Cys-173. The region spanning 152–386 (SHPPVSVHVP…EQLQEQIATE (235 aa)) is the Radical SAM core domain. In terms of domain architecture, TRAM spans 389 to 449 (ARFLGQTVEV…PWSLQGVPQL (61 aa)).

This sequence belongs to the methylthiotransferase family. MiaB subfamily. As to quaternary structure, monomer. Requires [4Fe-4S] cluster as cofactor.

Its subcellular location is the cytoplasm. It carries out the reaction N(6)-dimethylallyladenosine(37) in tRNA + (sulfur carrier)-SH + AH2 + 2 S-adenosyl-L-methionine = 2-methylsulfanyl-N(6)-dimethylallyladenosine(37) in tRNA + (sulfur carrier)-H + 5'-deoxyadenosine + L-methionine + A + S-adenosyl-L-homocysteine + 2 H(+). Its function is as follows. Catalyzes the methylthiolation of N6-(dimethylallyl)adenosine (i(6)A), leading to the formation of 2-methylthio-N6-(dimethylallyl)adenosine (ms(2)i(6)A) at position 37 in tRNAs that read codons beginning with uridine. In Chloroflexus aurantiacus (strain ATCC 29366 / DSM 635 / J-10-fl), this protein is tRNA-2-methylthio-N(6)-dimethylallyladenosine synthase.